A 305-amino-acid polypeptide reads, in one-letter code: Homeobox protein ceh-23 (305 aa).

2 disordered regions span residues 113–140 (ASCP…ERRR) and 262–305 (RRSK…KVLN). Over residues 120-135 (ASSQATVTLQVPSTGS) the composition is skewed to polar residues. The homeobox DNA-binding region spans 211-270 (HRKARTIYGTTQTQQLEDMFKGQMYVVGAERENLAQRLGLSPSQVRIWFQNRRSKHRRKQ). The span at 287–305 (GKDEEEDDEEDEDDVKVLN) shows a compositional bias: acidic residues.

Belongs to the distal-less homeobox family.

Its subcellular location is the nucleus. In terms of biological role, probable transcription factor. Required for differentiation of AIY interneurons, acting downstream of LIM/homeobox protein ttx-3. Modulates gene expression, acting downstream of AMP kinase aak-2/AMPK signaling. Modulates lifespan. In Caenorhabditis elegans, this protein is Homeobox protein ceh-23 (ceh-23).